Reading from the N-terminus, the 610-residue chain is Putative sensor histidine kinase NtrY-like (610 aa).

The next 4 membrane-spanning stretches (helical) occupy residues 18–38 (IGILVAIAIIFSYFTYYTISI), 49–69 (KVIWFLLIDLIIFLVLGILLT), 92–112 (IVVAFSLAAAIPTIIVSISSA), and 292–312 (IIFIFIALLLLLIAISFGVIV). The HAMP domain maps to 314–368 (AKIVNPIKKLVIATDKVKSGDLTVQVPENEVDKDEIGTLYAAFNRMIKQLSRQQR). The Histidine kinase domain maps to 385-596 (KVAHEIKNPL…VIDIRFNLEE (212 aa)). The residue at position 388 (histidine 388) is a Phosphohistidine; by autocatalysis.

The protein resides in the cell membrane. The catalysed reaction is ATP + protein L-histidine = ADP + protein N-phospho-L-histidine.. Its function is as follows. Member of the two-component regulatory system RBE_0470/RBE_0312. This chain is Putative sensor histidine kinase NtrY-like, found in Rickettsia bellii (strain RML369-C).